The primary structure comprises 160 residues: MMVKAVKKKTVTKINKKTSAPAAVKIKSRRLSPLADIDPDNAVQVLNRLWEVVMQRRDADPAVSHSARLLSRGIGKVAQKFGEEAVECLIEAVSGDKEALIGESADVLYHLLVLWVAVGVEPAEVWRELTKREGISGIAEKASRAKILPRAAGLKTTKIP.

Belongs to the PRA-PH family.

The protein resides in the cytoplasm. The enzyme catalyses 1-(5-phospho-beta-D-ribosyl)-ATP + H2O = 1-(5-phospho-beta-D-ribosyl)-5'-AMP + diphosphate + H(+). Its pathway is amino-acid biosynthesis; L-histidine biosynthesis; L-histidine from 5-phospho-alpha-D-ribose 1-diphosphate: step 2/9. This chain is Phosphoribosyl-ATP pyrophosphatase, found in Granulibacter bethesdensis (strain ATCC BAA-1260 / CGDNIH1).